The sequence spans 85 residues: Putative sodium channel toxin Ts37 (85 aa).

A signal peptide spans 1-20; sequence MAGEWACLLVSLVLLWGAAG. An LCN-type CS-alpha/beta domain is found at 22 to 83; the sequence is RDGFLLDRNF…KIWGDSVRCR (62 aa). 4 disulfide bridges follow: Cys32–Cys82, Cys36–Cys59, Cys45–Cys64, and Cys49–Cys66.

The protein belongs to the long (4 C-C) scorpion toxin superfamily. Sodium channel inhibitor family. Expressed by the venom gland.

The protein localises to the secreted. Its function is as follows. Putative sodium channel toxin. The polypeptide is Putative sodium channel toxin Ts37 (Tityus serrulatus (Brazilian scorpion)).